The following is a 205-amino-acid chain: Urease accessory protein UreE (205 aa).

Residues 170 to 192 (EHHGHSHSHSHDHDHDHDHDHQH) show a composition bias toward basic and acidic residues. Positions 170–205 (EHHGHSHSHSHDHDHDHDHDHQHGPCCSHGHHHGHR) are disordered.

It belongs to the UreE family.

It localises to the cytoplasm. In terms of biological role, involved in urease metallocenter assembly. Binds nickel. Probably functions as a nickel donor during metallocenter assembly. The polypeptide is Urease accessory protein UreE (Burkholderia pseudomallei (strain 668)).